Reading from the N-terminus, the 97-residue chain is Single insulin-like growth factor-binding domain protein-1 (97 aa).

The first 19 residues, methionine 1–alanine 19, serve as a signal peptide directing secretion. Residues phenylalanine 20 to isoleucine 96 enclose the IGFBP N-terminal domain. Threonine 21 is a glycosylation site (O-linked (GalNAc...) threonine). Disulfide bonds link cysteine 22-cysteine 45, cysteine 25-cysteine 47, cysteine 30-cysteine 48, cysteine 36-cysteine 51, cysteine 59-cysteine 75, and cysteine 69-cysteine 93.

In terms of tissue distribution, expressed in hemocytes.

It localises to the secreted. Functionally, has a role in the innate immune system. In Cupiennius salei (American wandering spider), this protein is Single insulin-like growth factor-binding domain protein-1.